Reading from the N-terminus, the 342-residue chain is Outer spore wall protein RRT8 (342 aa).

Residues 1–109 (MKAGIELISH…VLTNPVYWKH (109 aa)) lie on the Cytoplasmic side of the membrane. Residues 110–130 (ILLFAVCYALIFVTIAGLFYV) traverse the membrane as a helical segment. A topological domain (extracellular) is located at residue Thr131. Residues 132–152 (LVPLLVTWAILLLGPLGVILV) form a helical membrane-spanning segment. Residues 153–240 (HIQWILQTNV…PRLLFRMFFK (88 aa)) are Cytoplasmic-facing. A helical transmembrane segment spans residues 241-261 (VSNFTSLTLLSLIPIVGPILA). At 262-299 (NQLMAPKRTFTYLQRYFLLKGFSKKQAKDFQYEHYASF) the chain is on the extracellular side. The helical transmembrane segment at 300-320 (ICFGMSAGLLELIPFFTIVTI) threads the bilayer. Topologically, residues 321-342 (SSNTVGAAKWCTSLLKGERKKE) are cytoplasmic.

This sequence belongs to the LDS family.

Its subcellular location is the prospore membrane. The protein resides in the lipid droplet. It is found in the spore wall. Involved in spore wall assembly. May be involved in the modulation of rDNA transcription. The sequence is that of Outer spore wall protein RRT8 from Saccharomyces cerevisiae (strain ATCC 204508 / S288c) (Baker's yeast).